A 296-amino-acid polypeptide reads, in one-letter code: Acetylglutamate kinase (296 aa).

Residues 71–72 (GG), Arg93, and Asn186 each bind substrate.

This sequence belongs to the acetylglutamate kinase family. ArgB subfamily.

It is found in the cytoplasm. The enzyme catalyses N-acetyl-L-glutamate + ATP = N-acetyl-L-glutamyl 5-phosphate + ADP. It participates in amino-acid biosynthesis; L-arginine biosynthesis; N(2)-acetyl-L-ornithine from L-glutamate: step 2/4. Functionally, catalyzes the ATP-dependent phosphorylation of N-acetyl-L-glutamate. The chain is Acetylglutamate kinase from Synechococcus sp. (strain RCC307).